The sequence spans 1441 residues: Probable cleavage and polyadenylation specificity factor subunit 1 (1441 aa).

The protein belongs to the CPSF1 family. As to quaternary structure, CPSF is a heterotetramer composed of four distinct subunits 160, 100, 70 and 30 kDa.

Its subcellular location is the nucleus. Its function is as follows. CPSF plays a key role in pre-mRNA 3'-end formation, recognizing the AAUAAA signal sequence and interacting with poly(A)polymerase and other factors to bring about cleavage and poly(A) addition. This subunit is involved in the RNA recognition step of the polyadenylation reaction. The sequence is that of Probable cleavage and polyadenylation specificity factor subunit 1 from Oryza sativa subsp. japonica (Rice).